Reading from the N-terminus, the 113-residue chain is MAKIKKDDLVQVISGKDKGKQGKVLRVFPTDERVLVEGVNRVTKHLRAGQDNNGSTEGGLQVVEAPIHISNVAVVDPETKKPTRVGYRFETVEKDGVSKTVKVRFAKASGKEL.

This sequence belongs to the universal ribosomal protein uL24 family. As to quaternary structure, part of the 50S ribosomal subunit.

Functionally, one of two assembly initiator proteins, it binds directly to the 5'-end of the 23S rRNA, where it nucleates assembly of the 50S subunit. Its function is as follows. One of the proteins that surrounds the polypeptide exit tunnel on the outside of the subunit. This Micrococcus luteus (strain ATCC 4698 / DSM 20030 / JCM 1464 / CCM 169 / CCUG 5858 / IAM 1056 / NBRC 3333 / NCIMB 9278 / NCTC 2665 / VKM Ac-2230) (Micrococcus lysodeikticus) protein is Large ribosomal subunit protein uL24.